Consider the following 288-residue polypeptide: Transposase for insertion sequence element IS1106 (288 aa).

This sequence belongs to the transposase 11 family.

Involved in the transposition of the insertion sequence. This is Transposase for insertion sequence element IS1106 from Neisseria meningitidis serogroup B.